The sequence spans 288 residues: Phytanoyl-CoA dioxygenase domain-containing protein 1 homolog (288 aa).

Residues Lys95, Met134, 149–151 (HVD), and Trp167 each bind 2-oxoglutarate. The Fe cation site is built by His149 and Asp151. His242 provides a ligand contact to Fe cation. 2-oxoglutarate is bound by residues Ser244 and Arg253.

It belongs to the PhyH family. PHYHD1 subfamily. It depends on Fe cation as a cofactor.

In terms of biological role, has alpha-ketoglutarate-dependent dioxygenase activity. Does not show detectable activity towards fatty acid CoA thioesters. Is not expected to be active with phytanoyl CoA. The polypeptide is Phytanoyl-CoA dioxygenase domain-containing protein 1 homolog (Caenorhabditis elegans).